Reading from the N-terminus, the 234-residue chain is Ubiquitin domain-containing protein 2 (234 aa).

The disordered stretch occupies residues 1–46 (MGGCVGAQHDSSGSLNENSEGTGVALGRNQPLKKEKPKWKSDYPMT). Over residues 9-21 (HDSSGSLNENSEG) the composition is skewed to polar residues. The span at 32–41 (LKKEKPKWKS) shows a compositional bias: basic and acidic residues. The 76-residue stretch at 152 to 227 (SQLRLRLSTG…VQVIMSQPLQ (76 aa)) folds into the Ubiquitin-like domain.

Its subcellular location is the cytoplasm. The polypeptide is Ubiquitin domain-containing protein 2 (UBTD2) (Bos taurus (Bovine)).